The following is a 158-amino-acid chain: Glycine/sarcosine/betaine reductase complex component A1 (158 aa).

The active site involves Sec-46. A non-standard amino acid (selenocysteine) is located at residue Sec-46.

The protein belongs to the GrdA family. In terms of assembly, monomer. Component of the glycine, sarcosine and betaine reductase complexes, together with components B and C.

It catalyses the reaction acetyl phosphate + [thioredoxin]-disulfide + NH4(+) + H2O = [thioredoxin]-dithiol + glycine + phosphate + H(+). The enzyme catalyses acetyl phosphate + methylamine + [thioredoxin]-disulfide + H2O = sarcosine + [thioredoxin]-dithiol + phosphate + H(+). It carries out the reaction acetyl phosphate + trimethylamine + [thioredoxin]-disulfide + H2O = glycine betaine + [thioredoxin]-dithiol + phosphate + H(+). In terms of biological role, in the first step of glycine, betaine and sarcosine reductases, the substrate is bound to component PB via a Schiff base intermediate. Then the PB-activated substrate is nucleophilically attacked by the selenol anion of component PA to transform it to a carboxymethylated selenoether and the respective amine. By action of component PC, acetyl phosphate is formed, leaving component PA in its oxidized state. Finally component PA becomes reduced by the thioredoxin system to start a new catalytic cycle of reductive deamination. The protein is Glycine/sarcosine/betaine reductase complex component A1 (grdA1) of Photobacterium profundum (strain SS9).